The primary structure comprises 346 residues: KH domain-containing, RNA-binding, signal transduction-associated protein 3 (346 aa).

Residues 1-160 are involved in homodimerization; sequence MEEKYLPELM…IKKFLIPDYN (160 aa). Residue Lys4 forms a Glycyl lysine isopeptide (Lys-Gly) (interchain with G-Cter in SUMO2) linkage. A KH domain is found at 61–127; the sequence is LIPVKQFPKF…AKYFHLNDDL (67 aa). Residues 212–251 form an interaction with SIAH1 region; it reads RPVGVVVPRGTPTPRGVLSTRGPVSRGRGLLTPRARGVPP. Positions 213–228 are enriched in low complexity; that stretch reads PVGVVVPRGTPTPRGV. Disordered regions lie at residues 213 to 267 and 318 to 346; these read PVGV…ETYG and QEEW…YGRY. Residues 253-262 are compositionally biased toward pro residues; sequence GYRPPPPPPT.

It belongs to the KHDRBS family. Self-associates to form homooligomers; dimerization increases RNA affinity. Interacts with KHDRBS2/SLM-1. Interacts with KHDRBS1/SAM68; heterooligomer formation of KHDRBS family proteins may modulate RNA substrate specificity. Interacts with the splicing regulatory proteins SFRS9, SAFB and YTHDC1. Interacts with HNRPL. Interacts with RBMX, RBMY1A1, p85 subunit of PI3-kinase, SERPINB5. Interacts with SIAH1 which promotes targeting for degradation. In terms of processing, phosphorylated on tyrosine residues. Isoform 1 C-terminal region is tyrosine-rich, but isoform 2 lacking this C-terminal region is also tyrosine-phosphorylated. In terms of tissue distribution, ubiquitous with higher expression in testis, skeletal muscle and brain. Expressed in the kidney only in podocytes, the glomerular epithelial cells of the kidney. Strongly expressed after meiosis.

It localises to the nucleus. In terms of biological role, RNA-binding protein that plays a role in the regulation of alternative splicing and influences mRNA splice site selection and exon inclusion. Binds preferentially to the 5'-[AU]UAAA-3' motif in vitro. Binds optimally to RNA containing 5'-[AU]UAA-3' as a bipartite motif spaced by more than 15 nucleotides. Binds poly(A). RNA-binding abilities are down-regulated by tyrosine kinase PTK6. Involved in splice site selection of vascular endothelial growth factor. In vitro regulates CD44 alternative splicing by direct binding to purine-rich exonic enhancer. Can regulate alternative splicing of neurexins NRXN1-3 in the laminin G-like domain 6 containing the evolutionary conserved neurexin alternative spliced segment 4 (AS4) involved in neurexin selective targeting to postsynaptic partners such as neuroligins and LRRTM family members. Targeted, cell-type specific splicing regulation of NRXN1 at AS4 is involved in neuronal glutamatergic synapse function and plasticity. May regulate expression of KHDRBS2/SLIM-1 in defined brain neuron populations by modifying its alternative splicing. Can bind FABP9 mRNA. May play a role as a negative regulator of cell growth. Inhibits cell proliferation. Functionally, (Microbial infection) Involved in post-transcriptional regulation of HIV-1 gene expression. The chain is KH domain-containing, RNA-binding, signal transduction-associated protein 3 (KHDRBS3) from Homo sapiens (Human).